Reading from the N-terminus, the 246-residue chain is Mediator of RNA polymerase II transcription subunit 6 (246 aa).

2 disordered regions span residues 165–186 (MKKK…RSTN) and 207–246 (EALE…ATTK). Basic and acidic residues-rich tracts occupy residues 166–184 (KKKE…EERS) and 208–224 (ALEK…KPEE).

It belongs to the Mediator complex subunit 6 family. Component of the Mediator complex. Interacts with let-19/mdt-13. Interacts with RNA polymerase II. Interacts with mdt-28.

It is found in the nucleus. Functionally, component of the Mediator complex, a coactivator involved in the regulated transcription of nearly all RNA polymerase II-dependent genes. Mediator functions as a bridge to convey information from gene-specific regulatory proteins to the basal RNA polymerase II transcription machinery. Mediator is recruited to promoters by direct interactions with regulatory proteins and serves as a scaffold for the assembly of a functional preinitiation complex with RNA polymerase II and the general transcription factors. The sequence is that of Mediator of RNA polymerase II transcription subunit 6 (mdt-6) from Caenorhabditis briggsae.